A 463-amino-acid polypeptide reads, in one-letter code: Probable Xaa-Pro aminopeptidase pepP (463 aa).

Positions 259, 270, 393, and 433 each coordinate Mn(2+).

This sequence belongs to the peptidase M24B family. It depends on Mn(2+) as a cofactor.

The catalysed reaction is Release of any N-terminal amino acid, including proline, that is linked to proline, even from a dipeptide or tripeptide.. Functionally, catalyzes the removal of a penultimate prolyl residue from the N-termini of peptides. The chain is Probable Xaa-Pro aminopeptidase pepP (pepP) from Pyrenophora tritici-repentis (strain Pt-1C-BFP) (Wheat tan spot fungus).